Reading from the N-terminus, the 845-residue chain is Protein P (845 aa).

Residues 1–179 (MPLSYQHFRK…FCGSPYSWEQ (179 aa)) are terminal protein domain (TP). The spacer stretch occupies residues 180–348 (ELHHGRLVIK…YCLSHLVNLL (169 aa)). Positions 349–692 (EDWGPCTEHG…YMNLYPVARQ (344 aa)) are polymerase/reverse transcriptase domain (RT). In terms of domain architecture, Reverse transcriptase spans 359–602 (EHHIRIPRTP…YSLNFMGYVI (244 aa)). Residues Asp431, Asp553, and Asp554 each coordinate Mg(2+).

This sequence belongs to the hepadnaviridae P protein family.

It carries out the reaction DNA(n) + a 2'-deoxyribonucleoside 5'-triphosphate = DNA(n+1) + diphosphate. The enzyme catalyses Endonucleolytic cleavage to 5'-phosphomonoester.. Its activity is regulated as follows. Activated by host HSP70 and HSP40 in vitro to be able to bind the epsilon loop of the pgRNA. Because deletion of the RNase H region renders the protein partly chaperone-independent, the chaperones may be needed indirectly to relieve occlusion of the RNA-binding site by this domain. Inhibited by several reverse-transcriptase inhibitors: Lamivudine, Adefovir and Entecavir. Its function is as follows. Multifunctional enzyme that converts the viral RNA genome into dsDNA in viral cytoplasmic capsids. This enzyme displays a DNA polymerase activity that can copy either DNA or RNA templates, and a ribonuclease H (RNase H) activity that cleaves the RNA strand of RNA-DNA heteroduplexes in a partially processive 3'- to 5'-endonucleasic mode. Neo-synthesized pregenomic RNA (pgRNA) are encapsidated together with the P protein, and reverse-transcribed inside the nucleocapsid. Initiation of reverse-transcription occurs first by binding the epsilon loop on the pgRNA genome, and is initiated by protein priming, thereby the 5'-end of (-)DNA is covalently linked to P protein. Partial (+)DNA is synthesized from the (-)DNA template and generates the relaxed circular DNA (RC-DNA) genome. After budding and infection, the RC-DNA migrates in the nucleus, and is converted into a plasmid-like covalently closed circular DNA (cccDNA). The activity of P protein does not seem to be necessary for cccDNA generation, and is presumably released from (+)DNA by host nuclear DNA repair machinery. The chain is Protein P from Homo sapiens (Human).